Here is a 94-residue protein sequence, read N- to C-terminus: MEVKLLNIGFGNTVIANRVIAIVSPASAPMKRLKEDARQANKLIDATMGRRTRAIIVTDSDHIILSGVQAETIAQRLLTEGGVRDVNLLKQAKD.

The protein belongs to the RemA family.

This Syntrophobacter fumaroxidans (strain DSM 10017 / MPOB) protein is Putative regulatory protein Sfum_3631.